The chain runs to 202 residues: Glycerol-3-phosphate acyltransferase (202 aa).

6 consecutive transmembrane segments (helical) span residues 2-22, 51-71, 80-100, 116-136, 137-157, and 158-178; these read INLL…AVVV, KAAI…VLLA, VDET…LFPL, ILFA…LIIA, FFFR…PFFY, and VLMN…VLLI.

It belongs to the PlsY family. As to quaternary structure, probably interacts with PlsX.

Its subcellular location is the cell inner membrane. The catalysed reaction is an acyl phosphate + sn-glycerol 3-phosphate = a 1-acyl-sn-glycero-3-phosphate + phosphate. It functions in the pathway lipid metabolism; phospholipid metabolism. Catalyzes the transfer of an acyl group from acyl-phosphate (acyl-PO(4)) to glycerol-3-phosphate (G3P) to form lysophosphatidic acid (LPA). This enzyme utilizes acyl-phosphate as fatty acyl donor, but not acyl-CoA or acyl-ACP. The protein is Glycerol-3-phosphate acyltransferase of Cupriavidus metallidurans (strain ATCC 43123 / DSM 2839 / NBRC 102507 / CH34) (Ralstonia metallidurans).